A 106-amino-acid polypeptide reads, in one-letter code: SDO1-like protein C21C3.19 (106 aa).

Belongs to the SDO1-like family.

The protein localises to the cytoplasm. Its subcellular location is the nucleus. Its function is as follows. May play a role in RNA metabolism. The sequence is that of SDO1-like protein C21C3.19 from Schizosaccharomyces pombe (strain 972 / ATCC 24843) (Fission yeast).